A 493-amino-acid chain; its full sequence is Glutamyl-tRNA(Gln) amidotransferase subunit A (493 aa).

Active-site charge relay system residues include Lys78 and Ser158. The active-site Acyl-ester intermediate is Ser182.

It belongs to the amidase family. GatA subfamily. In terms of assembly, heterotrimer of A, B and C subunits.

The enzyme catalyses L-glutamyl-tRNA(Gln) + L-glutamine + ATP + H2O = L-glutaminyl-tRNA(Gln) + L-glutamate + ADP + phosphate + H(+). Allows the formation of correctly charged Gln-tRNA(Gln) through the transamidation of misacylated Glu-tRNA(Gln) in organisms which lack glutaminyl-tRNA synthetase. The reaction takes place in the presence of glutamine and ATP through an activated gamma-phospho-Glu-tRNA(Gln). This Rickettsia conorii (strain ATCC VR-613 / Malish 7) protein is Glutamyl-tRNA(Gln) amidotransferase subunit A.